The following is a 781-amino-acid chain: MATQADLMELDMAMEPDRKAAVSHWQQQSYLDSGIHSGATTTAPSLSGKGNPEEEDVDTSQVLYEWEQGFSQSFTQEQVADIDGQYAMTRAQRVRAAMFPETLDEGMQIPSTQFDAAHPTNVQRLAEPSQMLKHAVVNLINYQDDAELATRAIPELTKLLNDEDQVVVNKAAVMVHQLSKKEASRHAIMRSPQMVSAIVRTMQNTNDVETARCTAGTLHNLSHHREGLLAIFKSGGIPALVKMLGSPVDSVLFYAITTLHNLLLHQEGAKMAVRLAGGLQKMVALLNKTNVKFLAITTDCLQILAYGNQESKLIILASGGPQALVNIMRTYTYEKLLWTTSRVLKVLSVCSSNKPAIVEAGGMQALGLHLTDPSQRLVQNCLWTLRNLSDAATKQEGMEGLLGTLVQLLGSDDINVVTCAAGILSNLTCNNYKNKMMVCQVGGIEALVRTVLRAGDREDITEPAICALRHLTSRHQEAEMAQNAVRLHYGLPVVVKLLHPPSHWPLIKATVGLIRNLALCPANHAPLREQGAIPRLVQLLVRAHQDTQRRTSMGGTQQQFVEGVRMEEIVEGCTGALHILARDVHNRIVIRGLNTIPLFVQLLYSPIENIQRVAAGVLCELAQDKEAAEAIEAEGATAPLTELLHSRNEGVATYAAAVLFRMSEDKPQDYKKRLSVELTSSLFRTEPMAWNETADLGLDIGAQGEALGYRQDDPSYRSFHSGGYGQDALGMDPMMEHEMGGHHPGADYPVDGLPDLGHAQDLMDGLPPGDSNQLAWFDTDL.

An N-acetylalanine modification is found at Ala-2. The interval Ala-2–Ser-23 is interaction with VCL. Position 23 is a phosphoserine; by GSK3-beta; alternate (Ser-23). Ser-23 carries O-linked (GlcNAc) serine; alternate glycosylation. Ser-29 carries the phosphoserine; by GSK3-beta modification. Phosphoserine; by GSK3-beta and HIPK2 is present on residues Ser-33 and Ser-37. Positions Gly-34–Val-57 are disordered. Thr-41 is modified (phosphothreonine; by GSK3-beta). A Phosphoserine modification is found at Ser-45. N6-acetyllysine is present on Lys-49. Tyr-64 carries the phosphotyrosine; by PTK6 modification. Tyr-142 carries the phosphotyrosine; by FYN and PTK6 modification. ARM repeat units lie at residues Arg-151 to Ser-191, Gln-193 to Ser-234, Gly-235 to Ala-276, Gly-277 to Ser-318, Gly-319 to Ala-360, Gly-361 to Ser-389, Gly-400 to Val-441, Gly-442 to Ala-484, Tyr-489 to Gln-530, Gly-531 to Glu-571, Asn-594 to Ala-636, and Thr-637 to Lys-666. Positions Leu-156–Leu-178 are interaction with BCL9. Ser-191 carries the phosphoserine modification. Ser-246 carries the post-translational modification Phosphoserine; by CDK5. Phosphotyrosine occurs at positions 331 and 333. Ser-552 carries the post-translational modification Phosphoserine; by AMPK. Thr-556 is subject to Phosphothreonine. Cys-619 carries the post-translational modification S-nitrosocysteine. At Ser-675 the chain carries Phosphoserine. Positions His-720–Leu-781 are disordered. Positions Met-734–Gly-745 are enriched in basic and acidic residues. Residues Asn-772–Leu-781 form an interaction with SCRIB region.

It belongs to the beta-catenin family. As to quaternary structure, two separate complex-associated pools are found in the cytoplasm. The majority is present as component of an E-cadherin/ catenin adhesion complex composed of at least E-cadherin/CDH1 and beta-catenin/CTNNB1, and possibly alpha-catenin/CTNNA1; the complex is located to adherens junctions. The stable association of CTNNA1 is controversial as CTNNA1 was shown not to bind to F-actin when assembled in the complex. Alternatively, the CTNNA1-containing complex may be linked to F-actin by other proteins such as LIMA1. Binds NHERF1. Interacts with PTPRU (via the cytoplasmic juxtamembrane domain) and with EMD. Interacts with SESTD1 and TRPC4. Interacts with CAV1. Interacts with PTPRJ. Interacts with PKT7. Interacts with FAT1 (via the cytoplasmic domain). Interacts with CDK2, NDRG2 and NANOS1. Interacts with NEK2 and CDK5. Interacts with CARM1, CXADR, PCDH11Y and PTK6. Interacts with RAPGEF2. Interacts with SOX7; this interaction may lead to proteasomal degradation of active CTNNB1 and thus inhibition of Wnt/beta-catenin-stimulated transcription. Identified in a complex with HINT1 and MITF. Interacts with FHIT. Interacts with FERMT2. Identified in a complex with TCF4 and FERMT2. Another cytoplasmic pool is part of a large complex containing AXIN1, AXIN2, APC, CSNK1A1 and GSK3B that promotes phosphorylation on N-terminal Ser and Thr residues and ubiquitination of CTNNB1 via BTRC and its subsequent degradation by the proteasome. Wnt-dependent activation of DVL antagonizes the action of GSK3B. When GSK3B activity is inhibited the complex dissociates, CTNNB1 is dephosphorylated and is no longer targeted for destruction. The stabilized protein translocates to the nucleus, where it binds TCF/LEF-1 family members, BCL9, BCL9L and possibly also RUVBL1 and CHD8. Interacts with TAX1BP3 (via the PDZ domain); this interaction inhibits the transcriptional activity of CTNNB1. Interacts with AJAP1, BAIAP1 and CTNNA3. Interacts with TRPV4; the TRPV4 and CTNNB1 complex can interact with CDH1. Interacts with VCL. The CTNNB1 and TCF4 complex interacts with PML. Interacts with XIRP1. Binds CTNNBIP and EP300. CTNNB1 forms a ternary complex with LEF1 and EP300 that is disrupted by CTNNBIP1 binding. Interacts directly with AXIN1; the interaction is regulated by CDK2 phosphorylation of AXIN1. Interacts with GLIS2. Interacts with SCRIB. Interacts with TNIK and TCF7L2. Interacts with SLC30A9. Interacts with RORA. May interact with P-cadherin/CDH3. Interacts with RNF220. Interacts with CTNND2. Interacts (via the C-terminal region) with CBY1. The complex composed, at least, of APC, CTNNB1 and GSK3B interacts with JPT1; the interaction requires the inactive form of GSK3B (phosphorylated at 'Ser-9'). Interacts with DLG5. Interacts with FAM53B; promoting translocation to the nucleus. Interacts with TMEM170B. Interacts with AHI1. Interacts with GID8. Component of an cadherin:catenin adhesion complex composed of at least of CDH26, beta-catenin/CTNNB1, alpha-catenin/CTNNA1 and p120 catenin/CTNND1. Forms a complex comprising APPL1, RUVBL2, APPL2, HDAC1 and HDAC2. Interacts with IRF2BPL; mediates the ubiquitination and degradation of CTNNB1. Interacts with AMFR. Interacts with LMBR1L. Interacts with SOX30; prevents interaction of CTNNB1 with TCF7L2/TCF4 and leads to inhibition of Wnt signaling. Interacts with SOX9; inhibiting CTNNB1 activity by competing with the binding sites of TCF/LEF within CTNNB1, thereby inhibiting the Wnt signaling. Interacts with SPN/CD43 cytoplasmic tail. Interacts (when phosphorylated at Tyr-333) with isoform M2 of PKM (PKM2); promoting transcription activation. Interacts with PKP2 (via HEAD domain). Interacts with CDH1. Interacts (when unphosphorylated) with FLYWCH1, perhaps preventing interaction of CTNNB1 with TCF4, and thereby regulating transcription activation; phosphorylation of CTNNB1 may inhibit the interaction. Interacts (via the central armadillo domains) with probable transcriptional regulator ADNP (via N-terminal region); interaction is direct and stabilizes CTNNB1 by modulating its phosphorylation by glycogen synthase kinase-3 beta GSK3B. Interacts with NR5A2. Interacts with DSG2; the interaction promotes localization of CTNNB1 at cell junctions thus reducing its nuclear localization and subsequent transcription of CTNNB1/TCF-target genes. In terms of processing, phosphorylation at Ser-552 by AMPK promotes stabilization of the protein, enhancing TCF/LEF-mediated transcription. Phosphorylation by GSK3B requires prior phosphorylation of Ser-45 by another kinase. Phosphorylation proceeds then from Thr-41 to Ser-37 and Ser-33. Phosphorylated by NEK2. EGF stimulates tyrosine phosphorylation. Phosphorylated on Ser-33 and Ser-37 by HIPK2 and GSK3B, this phosphorylation triggers proteasomal degradation. Phosphorylation on Ser-191 and Ser-246 by CDK5. Phosphorylation by CDK2 regulates insulin internalization. Phosphorylation by PTK6 at Tyr-64, Tyr-142, Tyr-331 and/or Tyr-333 with the predominant site at Tyr-64 is not essential for inhibition of transcriptional activity. Phosphorylation by SRC at Tyr-333 promotes interaction with isoform M2 of PKM (PKM2); promoting transcription activation. Post-translationally, ubiquitinated by the SCF(BTRC) E3 ligase complex when phosphorylated by GSK3B, leading to its degradation. Ubiquitinated by a E3 ubiquitin ligase complex containing UBE2D1, SIAH1, CACYBP/SIP, SKP1, APC and TBL1X, leading to its subsequent proteasomal degradation. Ubiquitinated and degraded following interaction with SOX9. Ubiquitinated via 'Lys-11'- and 'Lys-29'-linked ubiquitin chains by UBR5, leading to its stabilization. S-nitrosylation at Cys-619 within adherens junctions promotes VEGF-induced, NO-dependent endothelial cell permeability by disrupting interaction with E-cadherin, thus mediating disassembly adherens junctions. In terms of processing, O-glycosylation at Ser-23 decreases nuclear localization and transcriptional activity, and increases localization to the plasma membrane and interaction with E-cadherin CDH1. Post-translationally, deacetylated at Lys-49 by SIRT1. In terms of tissue distribution, expressed in cerebellar granule neurons (at protein level). Expressed in the intestinal epithelium (at protein level). Abundantly expressed in the tooth, skin, lung, kidney, eye and brain with weak expression in the liver and heart.

It localises to the cytoplasm. It is found in the nucleus. The protein resides in the cytoskeleton. Its subcellular location is the cell junction. The protein localises to the adherens junction. It localises to the cell membrane. It is found in the microtubule organizing center. The protein resides in the centrosome. Its subcellular location is the spindle pole. The protein localises to the synapse. It localises to the cilium basal body. Functionally, key downstream component of the canonical Wnt signaling pathway. In the absence of Wnt, forms a complex with AXIN1, AXIN2, APC, CSNK1A1 and GSK3B that promotes phosphorylation on N-terminal Ser and Thr residues and ubiquitination of CTNNB1 via BTRC and its subsequent degradation by the proteasome. In the presence of Wnt ligand, CTNNB1 is not ubiquitinated and accumulates in the nucleus, where it acts as a coactivator for transcription factors of the TCF/LEF family, leading to activate Wnt responsive genes. Also acts as a coactivator for other transcription factors, such as NR5A2. Promotes epithelial to mesenchymal transition/mesenchymal to epithelial transition (EMT/MET) via driving transcription of CTNNB1/TCF-target genes. Involved in the regulation of cell adhesion, as component of an E-cadherin:catenin adhesion complex. Acts as a negative regulator of centrosome cohesion. Involved in the CDK2/PTPN6/CTNNB1/CEACAM1 pathway of insulin internalization. Blocks anoikis of malignant kidney and intestinal epithelial cells and promotes their anchorage-independent growth by down-regulating DAPK2. Disrupts PML function and PML-NB formation by inhibiting RANBP2-mediated sumoylation of PML. Promotes neurogenesis by maintaining sympathetic neuroblasts within the cell cycle. Involved in chondrocyte differentiation via interaction with SOX9: SOX9-binding competes with the binding sites of TCF/LEF within CTNNB1, thereby inhibiting the Wnt signaling. Acts as a positive regulator of odontoblast differentiation during mesenchymal tooth germ formation, via promoting the transcription of differentiation factors such as LEF1, BMP2 and BMP4. Activity is repressed in a MSX1-mediated manner at the bell stage of mesenchymal tooth germ formation which prevents premature differentiation of odontoblasts. The polypeptide is Catenin beta-1 (Mus musculus (Mouse)).